The primary structure comprises 1427 residues: Coiled-coil domain-containing protein 144A (1427 aa).

Over residues 1–11 (MASWGGEKRGG) the composition is skewed to basic and acidic residues. 5 disordered regions span residues 1-32 (MASW…VGSQ), 87-189 (AARS…LTER), 213-261 (LPEN…CDRE), 453-485 (NMNQ…DSDR), and 528-586 (EEEM…EVKN). 2 stretches are compositionally biased toward polar residues: residues 129–150 (PESL…LSDE) and 167–178 (VSPSMPENQSAT). Positions 224–234 (QDSELTSEEEQ) are enriched in acidic residues. Over residues 453–467 (NMNQNSDSGSTNNYK) the composition is skewed to polar residues. A coiled-coil region spans residues 490–545 (YLHEELQQDMQKFKNEVNTLEEEFLALKKEDVQLHKDVEEEMEKHRSNSTELSGTL). The segment covering 528-537 (EEEMEKHRSN) has biased composition (basic and acidic residues). Over residues 543–552 (GTLTDGTTVG) the composition is skewed to low complexity. Positions 563–584 (PRKENGEHDRPADKTSNEKNEV) are enriched in basic and acidic residues. 2 coiled-coil regions span residues 648–1129 (LLKL…DLTE) and 1155–1309 (FSMK…TQLT).

The protein belongs to the CCDC144 family.

May play a role in preventing the formation of kidney stones through inhibition of calcium oxalate monohydrate (COM) crystallization, attenuating COM-induced apoptotic injury to renal epithelial cells. May exhibit antilithiatic (preventing the formation of kidney stones) activity through crystal binding, hindering the crystal attachment to renal epithelial cells, a pre-requisite to initiate inflammatory response. This is Coiled-coil domain-containing protein 144A (CCDC144A) from Homo sapiens (Human).